The primary structure comprises 746 residues: Rhizobactin receptor (746 aa).

The N-terminal stretch at 1–26 (MGNNENGGISFCVFVVVIGFGTGAVA) is a signal peptide. Residues 40–47 (EEIVVTGG) carry the TonB box motif. The region spanning 52-163 (QISEIARTIY…TGGIINIITK (112 aa)) is the TBDR plug domain. In terms of domain architecture, TBDR beta-barrel spans 169–746 (EPGLHAEVTG…TFAVSLTKVF (578 aa)). Residues 729-746 (FDYKGRGRTFAVSLTKVF) carry the TonB C-terminal box motif.

This sequence belongs to the TonB-dependent receptor family.

The protein resides in the cell outer membrane. In terms of biological role, receptor for the siderophore rhizobactin. This Rhizobium meliloti (strain 1021) (Ensifer meliloti) protein is Rhizobactin receptor (rhtA).